The chain runs to 198 residues: MTCAQVIRQFYQATIMTATAQQLQFIKDSIKTIPDYPKPGILFRDVTSLLENPLAYAASIELLVERFREAGVTKVVGTEARGFLFGAPVALALGVGFVPVRKPGKLPRATLSESYELEYGTDKLEIHTDAISAGDKVLVVDDLLATGGTIEATAKLIRRLGGEVTDAAFIINLPDLGGEARLNTLGIECYSLVNFSGH.

The protein belongs to the purine/pyrimidine phosphoribosyltransferase family. As to quaternary structure, homodimer.

The protein resides in the cytoplasm. It carries out the reaction AMP + diphosphate = 5-phospho-alpha-D-ribose 1-diphosphate + adenine. The protein operates within purine metabolism; AMP biosynthesis via salvage pathway; AMP from adenine: step 1/1. Catalyzes a salvage reaction resulting in the formation of AMP, that is energically less costly than de novo synthesis. The polypeptide is Adenine phosphoribosyltransferase (Serratia proteamaculans (strain 568)).